We begin with the raw amino-acid sequence, 711 residues long: Long-chain-fatty-acid--CoA ligase 4 (711 aa).

Residues Leu-8–Ile-28 traverse the membrane as a helical; Signal-anchor for type III membrane protein segment. Residues Pro-29–Lys-711 lie on the Cytoplasmic side of the membrane. Ser-447 carries the phosphoserine modification.

The protein belongs to the ATP-dependent AMP-binding enzyme family. The cofactor is Mg(2+).

The protein resides in the mitochondrion outer membrane. It is found in the peroxisome membrane. The protein localises to the microsome membrane. Its subcellular location is the endoplasmic reticulum membrane. It localises to the cell membrane. The enzyme catalyses a long-chain fatty acid + ATP + CoA = a long-chain fatty acyl-CoA + AMP + diphosphate. It carries out the reaction (5Z,8Z,11Z,14Z)-eicosatetraenoate + ATP + CoA = (5Z,8Z,11Z,14Z)-eicosatetraenoyl-CoA + AMP + diphosphate. It catalyses the reaction hexadecanoate + ATP + CoA = hexadecanoyl-CoA + AMP + diphosphate. The catalysed reaction is (E)-hexadec-2-enoate + ATP + CoA = (2E)-hexadecenoyl-CoA + AMP + diphosphate. The enzyme catalyses 15-hydroxy-(5Z,8Z,11Z,13E)-eicosatetraenoate + ATP + CoA = 15-hydroxy-(5Z,8Z,11Z,13E)-eicosatetraenoyl-CoA + AMP + diphosphate. It carries out the reaction 12-hydroxy-(5Z,8Z,10E,14Z)-eicosatetraenoate + ATP + CoA = 12-hydroxy-(5Z,8Z,10E,14Z)-eicosatetraenoyl-CoA + AMP + diphosphate. It catalyses the reaction 5-hydroxy-(6E,8Z,11Z,14Z)-eicosatetraenoate + ATP + CoA = 5-hydroxy-(6E,8Z,11Z,14Z)-eicosatetraenoyl-CoA + AMP + diphosphate. The catalysed reaction is 5,6-epoxy-(8Z,11Z,14Z)-eicosatrienoate + ATP + CoA = 5,6-epoxy-(8Z,11Z,14Z)-eicosatrienoyl-CoA + AMP + diphosphate. The enzyme catalyses 14,15-epoxy-(5Z,8Z,11Z)-eicosatrienoate + ATP + CoA = 14,15-epoxy-(5Z,8Z,11Z)-eicosatrienoyl-CoA + AMP + diphosphate. It carries out the reaction 11,12-epoxy-(5Z,8Z,14Z)-eicosatrienoate + ATP + CoA = 11,12-epoxy-(5Z,8Z,14Z)-eicosatrienoyl-CoA + AMP + diphosphate. It catalyses the reaction 8,9-epoxy-(5Z,11Z,14Z)-eicosatrienoate + ATP + CoA = 8,9-epoxy-(5Z,11Z,14Z)-eicosatrienoyl-CoA + AMP + diphosphate. Its activity is regulated as follows. Both triacsin C and rosiglitazone inhibit arachidonoyl-CoA ligase activity. Its function is as follows. Catalyzes the conversion of long-chain fatty acids to their active form acyl-CoA for both synthesis of cellular lipids, and degradation via beta-oxidation. Preferentially activates arachidonate and eicosapentaenoate as substrates. Preferentially activates 8,9-EET &gt; 14,15-EET &gt; 5,6-EET &gt; 11,12-EET. Modulates glucose-stimulated insulin secretion by regulating the levels of unesterified EETs. Modulates prostaglandin E2 secretion. The chain is Long-chain-fatty-acid--CoA ligase 4 (ACSL4) from Homo sapiens (Human).